The sequence spans 547 residues: uncharacterized protein (547 aa).

The segment covering 38–50 has biased composition (basic and acidic residues); it reads RNLPFHREREKVE. Residues 38-89 form a disordered region; it reads RNLPFHREREKVESNPNSSDEEDLTSTNNTRSSDNTTSDTEDDSGEDSYQVE. Positions 62 to 75 are enriched in low complexity; sequence TSTNNTRSSDNTTS. 12 helical membrane-spanning segments follow: residues 108-128, 148-168, 174-194, 197-217, 233-253, 265-285, 346-366, 377-397, 418-438, 445-465, 478-500, and 514-534; these read IYTL…SSIF, LCSA…APLS, LPLY…GGCS, IWSL…PMSA, GALL…PVMG, WDFW…CFTM, MYLV…PLIF, GLAI…TPII, LFPL…LGWT, WAAP…VLAV, AASA…TIVA, and SLLA…FFWG.

Belongs to the major facilitator superfamily. CAR1 family.

It is found in the membrane. This is an uncharacterized protein from Schizosaccharomyces pombe (strain 972 / ATCC 24843) (Fission yeast).